We begin with the raw amino-acid sequence, 397 residues long: Exodeoxyribonuclease 7 large subunit (397 aa).

It belongs to the XseA family. As to quaternary structure, heterooligomer composed of large and small subunits.

It localises to the cytoplasm. It catalyses the reaction Exonucleolytic cleavage in either 5'- to 3'- or 3'- to 5'-direction to yield nucleoside 5'-phosphates.. Its function is as follows. Bidirectionally degrades single-stranded DNA into large acid-insoluble oligonucleotides, which are then degraded further into small acid-soluble oligonucleotides. The polypeptide is Exodeoxyribonuclease 7 large subunit (Anaplasma marginale (strain Florida)).